We begin with the raw amino-acid sequence, 353 residues long: Guanine nucleotide-binding protein G(q) subunit alpha (353 aa).

2 S-palmitoyl cysteine lipidation sites follow: Cys-3 and Cys-4. The G-alpha domain occupies 32–353; that stretch reads RELKLLLLGT…QLNLKEYNLV (322 aa). A G1 motif region spans residues 35–48; sequence KLLLLGTGESGKST. Residues 40-47, 174-180, 199-203, 268-271, and Ala-325 each bind GTP; these read GTGESGKS, LRVRVPT, DVGGQ, and NKKD. Mg(2+)-binding residues include Ser-47 and Thr-180. Residues 172–180 are G2 motif; the sequence is DILRVRVPT. Positions 195 to 204 are G3 motif; it reads FRMVDVGGQR. The segment at 264 to 271 is G4 motif; it reads ILFLNKKD. The segment at 323–328 is G5 motif; the sequence is TCATDT.

The protein belongs to the G-alpha family. G(q) subfamily. As to quaternary structure, g proteins are composed of 3 units; alpha, beta and gamma. The alpha chain contains the guanine nucleotide binding site.

Guanine nucleotide-binding proteins (G proteins) are involved as modulators or transducers in various transmembrane signaling systems. The sequence is that of Guanine nucleotide-binding protein G(q) subunit alpha (SCGQA) from Mizuhopecten yessoensis (Japanese scallop).